A 317-amino-acid chain; its full sequence is Glycine--tRNA ligase alpha subunit (317 aa).

This sequence belongs to the class-II aminoacyl-tRNA synthetase family. As to quaternary structure, tetramer of two alpha and two beta subunits.

The protein resides in the cytoplasm. The enzyme catalyses tRNA(Gly) + glycine + ATP = glycyl-tRNA(Gly) + AMP + diphosphate. The sequence is that of Glycine--tRNA ligase alpha subunit from Acidovorax ebreus (strain TPSY) (Diaphorobacter sp. (strain TPSY)).